The chain runs to 353 residues: Melatonin receptor type 1A (353 aa).

Residues 1 to 26 form a disordered region; the sequence is MRANGSELNGTVLPRDPPAEGSPRRP. Topologically, residues 1-32 are extracellular; the sequence is MRANGSELNGTVLPRDPPAEGSPRRPPWVTST. Residues N4 and N9 are each glycosylated (N-linked (GlcNAc...) asparagine). Residues 33-53 form a helical membrane-spanning segment; sequence LATILIFTIVVDLLGNLLVIL. At 54-66 the chain is on the cytoplasmic side; sequence SVYRNKKLRNAGN. A helical membrane pass occupies residues 67–87; sequence IFVVSLAIADLVVAIYPYPLV. Residues 88-105 lie on the Extracellular side of the membrane; the sequence is LTSVFHNGWNLGYLHCQI. C103 and C180 are disulfide-bonded. A helical transmembrane segment spans residues 106–126; that stretch reads SGFLMGLSVIGSIFNITGIAI. The Cytoplasmic segment spans residues 127 to 145; sequence NRYCYICHSLKYDKLYSDK. The helical transmembrane segment at 146–166 threads the bilayer; that stretch reads NSLCYVGLIWVLTVVAIVPNL. Residues 167–190 are Extracellular-facing; that stretch reads FVGSLQYDPRIYSCTFAQSVSSAY. Residues 191-211 traverse the membrane as a helical segment; that stretch reads TIAVVFFHFILPIAIVTYCYL. Over 212–243 the chain is Cytoplasmic; the sequence is RIWILVIQVRRRVKPDNNPRLKPHDFRNFVTM. A helical membrane pass occupies residues 244-264; that stretch reads FVVFVLFAVCWAPLNFIGLAV. Residues 265-277 lie on the Extracellular side of the membrane; that stretch reads AVDPETIIPRIPE. Residues 278 to 298 traverse the membrane as a helical segment; the sequence is WLFVSSYYMAYFNSCLNAIIY. The Cytoplasmic segment spans residues 299-353; sequence GLLNQNFRREYKKIVVSFCTAKAFFQDSSNDAADRIRSKPSPLITNNNQVKVDSV.

This sequence belongs to the G-protein coupled receptor 1 family. Expressed in optic tectum and retina, less in neostriatum, hypothalamus and thalamus.

The protein localises to the cell membrane. In terms of biological role, high affinity receptor for melatonin. The activity of this receptor is mediated by pertussis toxin sensitive G proteins that inhibits adenylate cyclase activity. This Gallus gallus (Chicken) protein is Melatonin receptor type 1A.